Here is a 245-residue protein sequence, read N- to C-terminus: Carbohydrate deacetylase (245 aa).

2 residues coordinate Mg(2+): His-59 and His-125.

Belongs to the YdjC deacetylase family. Homodimer. Mg(2+) serves as cofactor.

Probably catalyzes the deacetylation of acetylated carbohydrates an important step in the degradation of oligosaccharides. The sequence is that of Carbohydrate deacetylase from Listeria monocytogenes serotype 4b (strain CLIP80459).